A 453-amino-acid chain; its full sequence is Ribosomal protein uS12 methylthiotransferase RimO (453 aa).

Positions 3–118 constitute an MTTase N-terminal domain; it reads KKVGIISLGC…IAKVIEEFYS (116 aa). The [4Fe-4S] cluster site is built by C12, C48, C81, C162, C166, and C169. The 231-residue stretch at 148–378 folds into the Radical SAM core domain; it reads STNSGYAYLK…MQLQKEIVQR (231 aa). The 69-residue stretch at 381–449 folds into the TRAM domain; it reads ESRLEKVYKT…DYDLIGEVIN (69 aa).

The protein belongs to the methylthiotransferase family. RimO subfamily. The cofactor is [4Fe-4S] cluster.

It is found in the cytoplasm. It carries out the reaction L-aspartate(89)-[ribosomal protein uS12]-hydrogen + (sulfur carrier)-SH + AH2 + 2 S-adenosyl-L-methionine = 3-methylsulfanyl-L-aspartate(89)-[ribosomal protein uS12]-hydrogen + (sulfur carrier)-H + 5'-deoxyadenosine + L-methionine + A + S-adenosyl-L-homocysteine + 2 H(+). Its function is as follows. Catalyzes the methylthiolation of an aspartic acid residue of ribosomal protein uS12. This is Ribosomal protein uS12 methylthiotransferase RimO from Acetivibrio thermocellus (strain ATCC 27405 / DSM 1237 / JCM 9322 / NBRC 103400 / NCIMB 10682 / NRRL B-4536 / VPI 7372) (Clostridium thermocellum).